A 1210-amino-acid polypeptide reads, in one-letter code: uncharacterized protein (1210 aa).

This sequence to E.coli molybdate metabolism regulator (MolR).

This is an uncharacterized protein from Escherichia coli (strain K12).